Reading from the N-terminus, the 632-residue chain is Chaperone protein HtpG (632 aa).

Residues 1 to 339 (MAHETMSFQA…SADLPLNVSR (339 aa)) are a; substrate-binding. The tract at residues 340–559 (EILQESRDVK…DNDMSGYLQR (220 aa)) is b. The c stretch occupies residues 560–632 (MLKAAGQNAP…TNALLLSRAA (73 aa)).

This sequence belongs to the heat shock protein 90 family. In terms of assembly, homodimer.

It localises to the cytoplasm. Functionally, molecular chaperone. Has ATPase activity. This is Chaperone protein HtpG from Burkholderia lata (strain ATCC 17760 / DSM 23089 / LMG 22485 / NCIMB 9086 / R18194 / 383).